Consider the following 368-residue polypeptide: 4-hydroxy-3-methylbut-2-en-1-yl diphosphate synthase (flavodoxin) (368 aa).

[4Fe-4S] cluster-binding residues include Cys271, Cys274, Cys306, and Glu313.

This sequence belongs to the IspG family. [4Fe-4S] cluster serves as cofactor.

The enzyme catalyses (2E)-4-hydroxy-3-methylbut-2-enyl diphosphate + oxidized [flavodoxin] + H2O + 2 H(+) = 2-C-methyl-D-erythritol 2,4-cyclic diphosphate + reduced [flavodoxin]. Its pathway is isoprenoid biosynthesis; isopentenyl diphosphate biosynthesis via DXP pathway; isopentenyl diphosphate from 1-deoxy-D-xylulose 5-phosphate: step 5/6. Functionally, converts 2C-methyl-D-erythritol 2,4-cyclodiphosphate (ME-2,4cPP) into 1-hydroxy-2-methyl-2-(E)-butenyl 4-diphosphate. This Haemophilus influenzae (strain 86-028NP) protein is 4-hydroxy-3-methylbut-2-en-1-yl diphosphate synthase (flavodoxin).